The sequence spans 602 residues: Potassium-transporting ATPase potassium-binding subunit (602 aa).

The next 10 helical transmembrane spans lie at 3 to 23 (ANNLLQAAIFIVVLIAAAVPV), 64 to 84 (QYALATVAFNALGVLFLYALL), 135 to 155 (GLTVQNFLSAATGIVVVLALI), 178 to 198 (LYVLVPMAAIIAALLMSQGVI), 282 to 302 (FSNFLEIFAILIIPAALCLVF), 313 to 333 (VAVLAAMTVALAAAIGIETSA), 418 to 438 (GLYGMLVFALLAVFVAGLMIG), 456 to 476 (VSIVVLLTPLLVLVGTSIAVL), 522 to 542 (WMTAIAMWFGRFGTIVPVLAI), and 565 to 585 (LFVVLLLGTVLLVGALTYMPA).

The protein belongs to the KdpA family. The system is composed of three essential subunits: KdpA, KdpB and KdpC.

The protein resides in the cell inner membrane. Part of the high-affinity ATP-driven potassium transport (or Kdp) system, which catalyzes the hydrolysis of ATP coupled with the electrogenic transport of potassium into the cytoplasm. This subunit binds the periplasmic potassium ions and delivers the ions to the membrane domain of KdpB through an intramembrane tunnel. The chain is Potassium-transporting ATPase potassium-binding subunit from Burkholderia pseudomallei (strain K96243).